A 197-amino-acid chain; its full sequence is dCTP deaminase, dUMP-forming (197 aa).

DCTP is bound by residues 105 to 110 (RSSIGR), D123, 131 to 133 (TLE), Q152, Y166, K174, and Q178. E133 (proton donor/acceptor) is an active-site residue. Residues 161-183 (PAERPYGHPSRDSKYIGQTRPQT) are disordered. The segment covering 165 to 174 (PYGHPSRDSK) has biased composition (basic and acidic residues).

The protein belongs to the dCTP deaminase family. As to quaternary structure, homotrimer.

The catalysed reaction is dCTP + 2 H2O = dUMP + NH4(+) + diphosphate. It functions in the pathway pyrimidine metabolism; dUMP biosynthesis; dUMP from dCTP: step 1/1. Bifunctional enzyme that catalyzes both the deamination of dCTP to dUTP and the hydrolysis of dUTP to dUMP without releasing the toxic dUTP intermediate. The chain is dCTP deaminase, dUMP-forming from Methanothermobacter thermautotrophicus (strain ATCC 29096 / DSM 1053 / JCM 10044 / NBRC 100330 / Delta H) (Methanobacterium thermoautotrophicum).